The following is a 131-amino-acid chain: Biogenesis of lysosome-related organelles complex 1 subunit CNL1 (131 aa).

The disordered stretch occupies residues 1-29; sequence MSAPDSNSGHAHDSAQNEGAAEGTRDPFG. The stretch at 73–101 forms a coiled coil; that stretch reads DAIDINIEEMRRILQKCEELETHFDMLDQ.

This sequence belongs to the BLOC1S4 family. In terms of assembly, component of the biogenesis of lysosome-related organelles complex-1 (BLOC-1).

Its subcellular location is the cytoplasm. Component of the biogenesis of lysosome-related organelles complex-1 (BLOC-1), a complex that is involved in endosomal cargo sorting. The chain is Biogenesis of lysosome-related organelles complex 1 subunit CNL1 (CLN1) from Lachancea thermotolerans (strain ATCC 56472 / CBS 6340 / NRRL Y-8284) (Yeast).